The following is a 577-amino-acid chain: Arginine--tRNA ligase (577 aa).

A 'HIGH' region motif is present at residues 122 to 132 (PNVAKEMHVGH).

This sequence belongs to the class-I aminoacyl-tRNA synthetase family. In terms of assembly, monomer.

It is found in the cytoplasm. The catalysed reaction is tRNA(Arg) + L-arginine + ATP = L-arginyl-tRNA(Arg) + AMP + diphosphate. In Escherichia fergusonii (strain ATCC 35469 / DSM 13698 / CCUG 18766 / IAM 14443 / JCM 21226 / LMG 7866 / NBRC 102419 / NCTC 12128 / CDC 0568-73), this protein is Arginine--tRNA ligase.